Consider the following 655-residue polypeptide: Methylenetetrahydrofolate reductase (NADPH) (655 aa).

The interval 1–39 (MVNEPRGNGSPGPRWEGSSSGSESSRTSSRCSTPGLDPE) is disordered. Phosphoserine is present on residues S10, S18, S19, S20, S22, S24, S25, S28, and S29. Over residues 11 to 35 (PGPRWEGSSSGSESSRTSSRCSTPG) the composition is skewed to low complexity. T33 bears the Phosphothreonine mark. E62 acts as the Proton donor/acceptor in catalysis. Residues 62 to 67 (EFFPPR) and 93 to 94 (TW) each bind NAD(+). A Phosphothreonine modification is found at T93. FAD is bound at residue 93–94 (TW). At S102 the chain carries Phosphoserine. Residues H126, 156 to 158 (RGD), 173 to 174 (YA), Y196, 200 to 203 (HPEG), D209, and K216 contribute to the FAD site. Substrate is bound at residue D158. The substrate site is built by Q227, Y320, and R324. S393 is modified (phosphoserine). Phosphothreonine is present on T450. Residues N455, 460–463 (AAET), 480–484 (TINSQ), T559, and T572 each bind S-adenosyl-L-methionine.

The protein belongs to the methylenetetrahydrofolate reductase family. In terms of assembly, homodimer. FAD is required as a cofactor. In terms of processing, phosphorylation of an N-terminal serine-rich phosphorylation region increases sensitivity to S-adenosylmethionine and inhibition.

It carries out the reaction (6S)-5-methyl-5,6,7,8-tetrahydrofolate + NADP(+) = (6R)-5,10-methylene-5,6,7,8-tetrahydrofolate + NADPH + H(+). The protein operates within one-carbon metabolism; tetrahydrofolate interconversion. Allosterically regulated by S-adenosylmethionine (SAM). In terms of biological role, catalyzes the conversion of 5,10-methylenetetrahydrofolate to 5-methyltetrahydrofolate, a cosubstrate for homocysteine remethylation to methionine. Represents a key regulatory connection between the folate and methionine cycles. In Bos taurus (Bovine), this protein is Methylenetetrahydrofolate reductase (NADPH) (MTHFR).